The sequence spans 515 residues: VEDHCYYHGRVQNDAESTASISACNGLKGHFKLQGETYFIEPLKIPNSEAHAVYKYENIEKEDEAPKMCGVTQTNWESDEPIKKTLGLIVPPHGQKFEKKFIELIIVVDHSMVTKYNNDLTAVRTEIYERLNTVNEIYLPLNIHVALVGIVFWSNRDLINVTSSAADTLHSFGEWRGSDLLNQKRHDHAQLLTNVTLDGTTLGITFVFGMCKSDRSVELIRDYSNITFNMAYIMAHEMGHSLGMLHDTKSCTCGDKPCIMFSKESVPPPKEFSSCSYDQYNKYLLKYNPKCIVDPPLRKDIASPAVCGNGVWEEGEECDCGSPEDCENPCCDAATCKLKPGAECGNGECCDNCKIRKAGTECRPARDDCDVAEHCTGQSAECPRNEFQRNGQPCLNNSGYCYNGDCPIMLNQCIALFSPSATVAQDSCFQRNLQGSYYGHCRKEIGHYGKRFPCAAQDVKCGRLYCLDNSFKKNMRCKKDFSYSDENKGIVEPGTKCEDGKVCINRKCVDVNTAY.

The propeptide occupies 1–94 (VEDHCYYHGR…TLGLIVPPHG (94 aa)). Position 95 is a pyrrolidone carboxylic acid (glutamine 95). The Peptidase M12B domain maps to 100–296 (KFIELIIVVD…YNPKCIVDPP (197 aa)). Residue glutamate 103 participates in Ca(2+) binding. Asparagine 160 carries N-linked (GlcNAc...) asparagine glycosylation. A Ca(2+)-binding site is contributed by aspartate 187. 2 N-linked (GlcNAc...) asparagine glycosylation sites follow: asparagine 194 and asparagine 225. 3 disulfides stabilise this stretch: cysteine 211-cysteine 291, cysteine 251-cysteine 275, and cysteine 253-cysteine 258. Histidine 236 lines the Zn(2+) pocket. Glutamate 237 is an active-site residue. Residues histidine 240 and histidine 246 each coordinate Zn(2+). Residues cysteine 291, valine 306, asparagine 309, valine 311, glutamate 313, glutamate 316, and aspartate 319 each coordinate Ca(2+). In terms of domain architecture, Disintegrin spans 304 to 390 (PAVCGNGVWE…ECPRNEFQRN (87 aa)). 14 disulfide bridges follow: cysteine 307/cysteine 336, cysteine 318/cysteine 331, cysteine 320/cysteine 326, cysteine 330/cysteine 353, cysteine 344/cysteine 350, cysteine 349/cysteine 375, cysteine 362/cysteine 382, cysteine 369/cysteine 401, cysteine 394/cysteine 406, cysteine 413/cysteine 466, cysteine 428/cysteine 477, cysteine 441/cysteine 454, cysteine 461/cysteine 503, and cysteine 497/cysteine 508. The D/ECD-tripeptide signature appears at 368–370 (DCD). Residues aspartate 370, valine 371, and asparagine 385 each contribute to the Ca(2+) site.

The protein belongs to the venom metalloproteinase (M12B) family. P-III subfamily. P-IIIa sub-subfamily. Monomer. It depends on Zn(2+) as a cofactor. Expressed by the venom gland.

The protein localises to the secreted. In terms of biological role, snake venom zinc metalloproteinase that catalyzes the conversion of prothrombin (F2) to alpha-thrombin through formation of a thrombin intermediate, thereby functioning as a procoagulant protein. The sequence is that of Zinc metalloproteinase-disintegrin-like EoMP06 from Echis ocellatus (Ocellated saw-scaled viper).